Reading from the N-terminus, the 434-residue chain is Nicotinate phosphoribosyltransferase (434 aa).

Position 242 is a phosphohistidine; by autocatalysis (H242).

It belongs to the NAPRTase family. In terms of processing, transiently phosphorylated on a His residue during the reaction cycle. Phosphorylation strongly increases the affinity for substrates and increases the rate of nicotinate D-ribonucleotide production. Dephosphorylation regenerates the low-affinity form of the enzyme, leading to product release.

It carries out the reaction nicotinate + 5-phospho-alpha-D-ribose 1-diphosphate + ATP + H2O = nicotinate beta-D-ribonucleotide + ADP + phosphate + diphosphate. The protein operates within cofactor biosynthesis; NAD(+) biosynthesis; nicotinate D-ribonucleotide from nicotinate: step 1/1. Functionally, catalyzes the synthesis of beta-nicotinate D-ribonucleotide from nicotinate and 5-phospho-D-ribose 1-phosphate at the expense of ATP. This is Nicotinate phosphoribosyltransferase from Bartonella tribocorum (strain CIP 105476 / IBS 506).